We begin with the raw amino-acid sequence, 995 residues long: Translation initiation factor IF-2 (995 aa).

The segment at 53-399 (NNAGSPAPAA…SGAPRGQGQV (347 aa)) is disordered. Pro residues-rich tracts occupy residues 60–87 (PAAP…PPGG) and 104–119 (TPGP…PPQS). Low complexity predominate over residues 135-160 (AAAEARAAALKAEQEAAVKAAQAARQ). The span at 161–171 (QQRENVRREPP) shows a compositional bias: basic and acidic residues. Positions 177–192 (RPGPRPGPGTMPPRPG) are enriched in pro residues. Over residues 193–202 (SPAAGRSGAP) the composition is skewed to low complexity. 2 stretches are compositionally biased toward pro residues: residues 203–213 (APGPGPRPGGR) and 242–264 (RPSP…PSPA). The segment covering 273-363 (RPGGPGSGRP…GAAGAFGRPG (91 aa)) has biased composition (gly residues). Over residues 367 to 376 (TRGRKSKKQR) the composition is skewed to basic residues. Residues 486–658 (SRPPVVTVMG…VLLTADASLE (173 aa)) form the tr-type G domain. A G1 region spans residues 495 to 502 (GHVDHGKT). 495–502 (GHVDHGKT) is a binding site for GTP. The tract at residues 520–524 (GITQH) is G2. A G3 region spans residues 545-548 (DTPG). GTP contacts are provided by residues 545-549 (DTPGH) and 599-602 (NKID). The interval 599-602 (NKID) is G4. The tract at residues 635–637 (AAK) is G5.

Belongs to the TRAFAC class translation factor GTPase superfamily. Classic translation factor GTPase family. IF-2 subfamily.

It is found in the cytoplasm. Its function is as follows. One of the essential components for the initiation of protein synthesis. Protects formylmethionyl-tRNA from spontaneous hydrolysis and promotes its binding to the 30S ribosomal subunits. Also involved in the hydrolysis of GTP during the formation of the 70S ribosomal complex. This Salinispora arenicola (strain CNS-205) protein is Translation initiation factor IF-2.